The following is a 298-amino-acid chain: GTP cyclohydrolase FolE2 (298 aa).

Belongs to the GTP cyclohydrolase IV family.

The catalysed reaction is GTP + H2O = 7,8-dihydroneopterin 3'-triphosphate + formate + H(+). Its pathway is cofactor biosynthesis; 7,8-dihydroneopterin triphosphate biosynthesis; 7,8-dihydroneopterin triphosphate from GTP: step 1/1. Its function is as follows. Converts GTP to 7,8-dihydroneopterin triphosphate. This Pseudomonas fluorescens (strain Pf0-1) protein is GTP cyclohydrolase FolE2.